A 520-amino-acid chain; its full sequence is Lysine--tRNA ligase (520 aa).

The segment at 1 to 21 is disordered; the sequence is MSDHLIPSIPTPAAAPAAAPA. Positions 12–21 are enriched in low complexity; sequence PAAAPAAAPA. Glu430 and Glu437 together coordinate Mg(2+).

Belongs to the class-II aminoacyl-tRNA synthetase family. As to quaternary structure, homodimer. Mg(2+) serves as cofactor.

It is found in the cytoplasm. The catalysed reaction is tRNA(Lys) + L-lysine + ATP = L-lysyl-tRNA(Lys) + AMP + diphosphate. This Variovorax paradoxus (strain S110) protein is Lysine--tRNA ligase.